A 126-amino-acid polypeptide reads, in one-letter code: Histone H2B type 1-K (126 aa).

Residues 1–12 (MPEPAKSAPAPK) are compositionally biased toward low complexity. The disordered stretch occupies residues 1 to 36 (MPEPAKSAPAPKKGSKKAVTKAQKKDGKKRKRSRKE). N-acetylproline is present on Pro-2. Glu-3 carries the post-translational modification ADP-ribosyl glutamic acid. Lys-6 is modified (N6-(2-hydroxyisobutyryl)lysine; alternate). Lys-6 is subject to N6-(beta-hydroxybutyryl)lysine; alternate. Lys-6 is subject to N6-acetyllysine; alternate. Residue Lys-6 is modified to N6-butyryllysine; alternate. Lys-6 is modified (N6-crotonyllysine; alternate). Lys-6 is modified (N6-lactoyllysine; alternate). Lys-6 participates in a covalent cross-link: Glycyl lysine isopeptide (Lys-Gly) (interchain with G-Cter in SUMO2); alternate. Ser-7 carries the post-translational modification ADP-ribosylserine. The residue at position 12 (Lys-12) is an N6-(beta-hydroxybutyryl)lysine; alternate. N6-acetyllysine; alternate occurs at positions 12 and 13. Lys-12 and Lys-13 each carry N6-crotonyllysine; alternate. Lys-12 carries the post-translational modification N6-lactoyllysine; alternate. Lys-13 carries the N6-(2-hydroxyisobutyryl)lysine; alternate modification. Ser-15 is modified (phosphoserine; by STK4/MST1). N6-acetyllysine; alternate is present on residues Lys-16, Lys-17, Lys-21, and Lys-24. 4 positions are modified to N6-crotonyllysine; alternate: Lys-16, Lys-17, Lys-21, and Lys-24. N6-lactoyllysine; alternate is present on residues Lys-16, Lys-17, Lys-21, and Lys-24. The residue at position 17 (Lys-17) is an N6-glutaryllysine; alternate. Lys-21 and Lys-24 each carry N6-(2-hydroxyisobutyryl)lysine; alternate. Residue Lys-21 is modified to N6-(beta-hydroxybutyryl)lysine; alternate. Position 21 is an N6-butyryllysine; alternate (Lys-21). Lys-21 is covalently cross-linked (Glycyl lysine isopeptide (Lys-Gly) (interchain with G-Cter in SUMO2); alternate). The residue at position 25 (Lys-25) is an N6-(2-hydroxyisobutyryl)lysine. Lys-35 bears the N6-(2-hydroxyisobutyryl)lysine; alternate mark. The residue at position 35 (Lys-35) is an N6-(beta-hydroxybutyryl)lysine; alternate. At Lys-35 the chain carries N6-crotonyllysine; alternate. Lys-35 carries the post-translational modification N6-glutaryllysine; alternate. Lys-35 carries the post-translational modification N6-succinyllysine; alternate. Residue Lys-35 forms a Glycyl lysine isopeptide (Lys-Gly) (interchain with G-Cter in ubiquitin); alternate linkage. Glu-36 carries the post-translational modification PolyADP-ribosyl glutamic acid. Ser-37 is modified (phosphoserine; by AMPK). Lys-44, Lys-47, and Lys-58 each carry N6-(2-hydroxyisobutyryl)lysine; alternate. N6-lactoyllysine; alternate is present on Lys-44. Residues Lys-44 and Lys-47 each carry the N6-glutaryllysine; alternate modification. N6-methyllysine; alternate is present on Lys-47. Lys-58 is subject to N6,N6-dimethyllysine; alternate. A Dimethylated arginine modification is found at Arg-80. N6-(2-hydroxyisobutyryl)lysine; alternate is present on Lys-86. N6-acetyllysine; alternate is present on Lys-86. Lys-86 is modified (N6-lactoyllysine; alternate). Lys-86 is modified (N6,N6,N6-trimethyllysine; alternate). Arg-87 and Arg-93 each carry omega-N-methylarginine. At Lys-109 the chain carries N6-(2-hydroxyisobutyryl)lysine; alternate. At Lys-109 the chain carries N6-lactoyllysine; alternate. N6-glutaryllysine; alternate is present on Lys-109. Position 109 is an N6-methyllysine; alternate (Lys-109). Residue Ser-113 is glycosylated (O-linked (GlcNAc) serine). Phosphothreonine is present on Thr-116. N6-(2-hydroxyisobutyryl)lysine; alternate occurs at positions 117 and 121. An N6-(beta-hydroxybutyryl)lysine; alternate modification is found at Lys-117. 2 positions are modified to N6-lactoyllysine; alternate: Lys-117 and Lys-121. 2 positions are modified to N6-glutaryllysine; alternate: Lys-117 and Lys-121. An N6-succinyllysine; alternate mark is found at Lys-117 and Lys-121. N6-methylated lysine; alternate is present on Lys-117. Residue Lys-121 forms a Glycyl lysine isopeptide (Lys-Gly) (interchain with G-Cter in ubiquitin); alternate linkage.

This sequence belongs to the histone H2B family. In terms of assembly, the nucleosome is a histone octamer containing two molecules each of H2A, H2B, H3 and H4 assembled in one H3-H4 heterotetramer and two H2A-H2B heterodimers. The octamer wraps approximately 147 bp of DNA. In terms of processing, monoubiquitination at Lys-35 (H2BK34Ub) by the MSL1/MSL2 dimer is required for histone H3 'Lys-4' (H3K4me) and 'Lys-79' (H3K79me) methylation and transcription activation at specific gene loci, such as HOXA9 and MEIS1 loci. Similarly, monoubiquitination at Lys-121 (H2BK120Ub) by the RNF20/40 complex gives a specific tag for epigenetic transcriptional activation and is also prerequisite for histone H3 'Lys-4' and 'Lys-79' methylation. It also functions cooperatively with the FACT dimer to stimulate elongation by RNA polymerase II. H2BK120Ub also acts as a regulator of mRNA splicing: deubiquitination by USP49 is required for efficient cotranscriptional splicing of a large set of exons. Post-translationally, phosphorylated on Ser-15 (H2BS14ph) by STK4/MST1 during apoptosis; which facilitates apoptotic chromatin condensation. Also phosphorylated on Ser-15 in response to DNA double strand breaks (DSBs), and in correlation with somatic hypermutation and immunoglobulin class-switch recombination. Phosphorylation at Ser-37 (H2BS36ph) by AMPK in response to stress promotes transcription. GlcNAcylation at Ser-113 promotes monoubiquitination of Lys-121. It fluctuates in response to extracellular glucose, and associates with transcribed genes. In terms of processing, ADP-ribosylated by PARP1 or PARP2 on Ser-7 (H2BS6ADPr) in response to DNA damage. H2BS6ADPr promotes recruitment of CHD1L. Mono-ADP-ribosylated on Glu-3 (H2BE2ADPr) by PARP3 in response to single-strand breaks. Poly ADP-ribosylation on Glu-36 (H2BE35ADPr) by PARP1 regulates adipogenesis: it inhibits phosphorylation at Ser-37 (H2BS36ph), thereby blocking expression of pro-adipogenetic genes. Post-translationally, crotonylation (Kcr) is specifically present in male germ cells and marks testis-specific genes in post-meiotic cells, including X-linked genes that escape sex chromosome inactivation in haploid cells. Crotonylation marks active promoters and enhancers and confers resistance to transcriptional repressors. It is also associated with post-meiotically activated genes on autosomes. Lactylated in macrophages by EP300/P300 by using lactoyl-CoA directly derived from endogenous or exogenous lactate, leading to stimulates gene transcription.

The protein localises to the nucleus. The protein resides in the chromosome. Its function is as follows. Core component of nucleosome. Nucleosomes wrap and compact DNA into chromatin, limiting DNA accessibility to the cellular machineries which require DNA as a template. Histones thereby play a central role in transcription regulation, DNA repair, DNA replication and chromosomal stability. DNA accessibility is regulated via a complex set of post-translational modifications of histones, also called histone code, and nucleosome remodeling. The chain is Histone H2B type 1-K from Macaca fascicularis (Crab-eating macaque).